The sequence spans 158 residues: MSLILDITDETGRVPEDRLAEIEKLLQFAAAEEGVADGAEVSVTIVNNEEIQKINKEYRGKDYPTDVISFALEEDGEGEVEIIGADMPPVLGDIIISVDKAREQAEEYGHSLMRELGFLTVHGFLHLLGYDHMTEEEEKEMFTKQKEILNRYGLSRSS.

Zn(2+) contacts are provided by His-122, His-126, and His-132.

Belongs to the endoribonuclease YbeY family. It depends on Zn(2+) as a cofactor.

Its subcellular location is the cytoplasm. Single strand-specific metallo-endoribonuclease involved in late-stage 70S ribosome quality control and in maturation of the 3' terminus of the 16S rRNA. This Bacillus licheniformis (strain ATCC 14580 / DSM 13 / JCM 2505 / CCUG 7422 / NBRC 12200 / NCIMB 9375 / NCTC 10341 / NRRL NRS-1264 / Gibson 46) protein is Endoribonuclease YbeY.